Consider the following 454-residue polypeptide: Protein odr-4 homolog (454 aa).

A run of 2 helical transmembrane segments spans residues 82 to 102 (MLPG…ELAN) and 432 to 452 (IGVI…FHYF).

It belongs to the ODR-4 family. As to expression, ubiquitously expressed.

It localises to the membrane. Its function is as follows. May play a role in the trafficking of a subset of G-protein coupled receptors. The sequence is that of Protein odr-4 homolog from Homo sapiens (Human).